We begin with the raw amino-acid sequence, 680 residues long: UvrABC system protein C (680 aa).

A GIY-YIG domain is found at 66-144 (NSPGVYRMFN…IKRLRPRFNV (79 aa)). Residues 254–289 (QKVKSHMAEAMNQAAEDLDFERAAIYRDRLAALSHV) enclose the UVR domain.

The protein belongs to the UvrC family. As to quaternary structure, interacts with UvrB in an incision complex.

The protein localises to the cytoplasm. Functionally, the UvrABC repair system catalyzes the recognition and processing of DNA lesions. UvrC both incises the 5' and 3' sides of the lesion. The N-terminal half is responsible for the 3' incision and the C-terminal half is responsible for the 5' incision. In Rhizobium johnstonii (strain DSM 114642 / LMG 32736 / 3841) (Rhizobium leguminosarum bv. viciae), this protein is UvrABC system protein C.